We begin with the raw amino-acid sequence, 358 residues long: tRNA-specific 2-thiouridylase MnmA (358 aa).

ATP contacts are provided by residues 8–15 (GLSGGVDS) and Met34. Residues 94 to 96 (NPD) are interaction with target base in tRNA. Cys99 acts as the Nucleophile in catalysis. Residues Cys99 and Cys196 are joined by a disulfide bond. ATP is bound at residue Gly123. The segment at 146 to 148 (KDQ) is interaction with tRNA. The active-site Cysteine persulfide intermediate is the Cys196. The interaction with tRNA stretch occupies residues 308–309 (RY).

This sequence belongs to the MnmA/TRMU family.

The protein localises to the cytoplasm. The enzyme catalyses S-sulfanyl-L-cysteinyl-[protein] + uridine(34) in tRNA + AH2 + ATP = 2-thiouridine(34) in tRNA + L-cysteinyl-[protein] + A + AMP + diphosphate + H(+). In terms of biological role, catalyzes the 2-thiolation of uridine at the wobble position (U34) of tRNA, leading to the formation of s(2)U34. The chain is tRNA-specific 2-thiouridylase MnmA from Thiobacillus denitrificans (strain ATCC 25259 / T1).